Consider the following 29-residue polypeptide: EPIDLLGKVFVFSKESNVDDVKLLTPQTE.

The Pentraxin (PTX) domain maps to 6–29 (LGKVFVFSKESNVDDVKLLTPQTE).

The protein belongs to the pentraxin family. In terms of assembly, homopentamer. Pentraxin (or pentaxin) have a discoid arrangement of 5 non-covalently bound subunits. Ca(2+) is required as a cofactor.

It localises to the secreted. This Hippoglossus hippoglossus (Atlantic halibut) protein is Serum amyloid P-component.